A 102-amino-acid chain; its full sequence is Small ribosomal subunit protein uS10 (102 aa).

It belongs to the universal ribosomal protein uS10 family. As to quaternary structure, part of the 30S ribosomal subunit.

Functionally, involved in the binding of tRNA to the ribosomes. In Leptospira borgpetersenii serovar Hardjo-bovis (strain JB197), this protein is Small ribosomal subunit protein uS10.